A 253-amino-acid polypeptide reads, in one-letter code: tRNA pseudouridine synthase A (253 aa).

Residue D53 is the Nucleophile of the active site. Y111 contacts substrate.

The protein belongs to the tRNA pseudouridine synthase TruA family. As to quaternary structure, homodimer.

The catalysed reaction is uridine(38/39/40) in tRNA = pseudouridine(38/39/40) in tRNA. In terms of biological role, formation of pseudouridine at positions 38, 39 and 40 in the anticodon stem and loop of transfer RNAs. This chain is tRNA pseudouridine synthase A, found in Oceanobacillus iheyensis (strain DSM 14371 / CIP 107618 / JCM 11309 / KCTC 3954 / HTE831).